A 282-amino-acid chain; its full sequence is MILVTGATGAVGREVAGRLADAGPVRILARRPERLTVRGTGVEVVQGAYGDRAALDRALRGVDAVFLVTNDPTEPDDERVAAAAAAAGVRHLVKLSMMAVEEPDAEDFITRRQRENEQAVRDSGVPWTFVRPRTFMSNTLSWAPGIRSAGVVRALYGDAPVACVDPRDVAAVAVAALTGTGHEGRAYAVSGPEAITAREQTAQLSRVLGRPLRFEELGVDAARTALMAKYPPPVAEAFLQSAERQRTGAKASVVPTVQELTGRPARPFRDWSAEHAEAFAPE.

6–11 (GATGAV) serves as a coordination point for NADP(+).

This sequence belongs to the NmrA-type oxidoreductase family.

The enzyme catalyses a [(3S,4R)-4-alkanoyl-5-oxooxolan-3-yl]methyl phosphate + NADP(+) = a (4-alkanoyl-5-oxo-2,5-dihydrofuran-3-yl)methyl phosphate + NADPH + H(+). The catalysed reaction is [(3S,4R)-4-(6-methylheptanoyl)-5-oxooxolan-3-yl]methyl phosphate + NADP(+) = [4-(6-methylheptanoyl)-5-oxo-2H-furan-3-yl]methyl phosphate + NADPH + H(+). Involved in the biosynthesis of A factor (2-isocapryloyl-3R-hydroxymethyl-gamma-butyrolactone), a gamma-butyrolactone autoregulator that triggers secondary metabolism and morphogenesis in Streptomyces. Catalyzes the reduction of the butenolide phosphate produced by nonenzymatic intramolecular condensation of the 8-methyl-3-oxononanoyl-DHAP ester. The chain is (4-alkanoyl-5-oxo-2,5-dihydrofuran-3-yl)methyl phosphate reductase from Streptomyces griseus subsp. griseus (strain JCM 4626 / CBS 651.72 / NBRC 13350 / KCC S-0626 / ISP 5235).